Consider the following 499-residue polypeptide: Glutamyl-tRNA(Gln) amidotransferase subunit B, chloroplastic/mitochondrial (499 aa).

It belongs to the GatB/GatE family. GatB subfamily. In terms of assembly, subunit of the heterotrimeric GatCAB amidotransferase (AdT) complex, composed of A, B and C subunits.

The protein localises to the mitochondrion. It localises to the plastid. The protein resides in the chloroplast. The enzyme catalyses L-glutamyl-tRNA(Gln) + L-glutamine + ATP + H2O = L-glutaminyl-tRNA(Gln) + L-glutamate + ADP + phosphate + H(+). Allows the formation of correctly charged Gln-tRNA(Gln) through the transamidation of misacylated Glu-tRNA(Gln) in chloroplasts and mitochondria. The reaction takes place in the presence of glutamine and ATP through an activated gamma-phospho-Glu-tRNA(Gln). The chain is Glutamyl-tRNA(Gln) amidotransferase subunit B, chloroplastic/mitochondrial from Ostreococcus lucimarinus (strain CCE9901).